We begin with the raw amino-acid sequence, 239 residues long: Large ribosomal subunit protein bL25 (239 aa).

A disordered region spans residues 217–239 (IKAEAHAAEGTQAEGSTEEGQQQ). Residues 229 to 239 (AEGSTEEGQQQ) are compositionally biased toward polar residues.

It belongs to the bacterial ribosomal protein bL25 family. CTC subfamily. In terms of assembly, part of the 50S ribosomal subunit; part of the 5S rRNA/L5/L18/L25 subcomplex. Contacts the 5S rRNA. Binds to the 5S rRNA independently of L5 and L18.

Functionally, this is one of the proteins that binds to the 5S RNA in the ribosome where it forms part of the central protuberance. The polypeptide is Large ribosomal subunit protein bL25 (Deinococcus deserti (strain DSM 17065 / CIP 109153 / LMG 22923 / VCD115)).